The following is a 332-amino-acid chain: Alpha/beta hydrolase domain-containing protein aho-3 (332 aa).

Over residues M1–P15 the composition is skewed to low complexity. The segment at M1–G24 is disordered. Catalysis depends on charge relay system residues S191, D256, and H285.

It belongs to the AB hydrolase superfamily. ABHD17 family. Palmitoylated on cysteine residues located in a cysteine cluster at the N-terminus which promotes membrane localization and localization to sensory neuron endings. As to expression, expressed in a subset of neurons including AIY, HSN, ADF, AFD, AWC, AWB and NSM, hypodermis, pharyngeal muscle and intestine.

The protein localises to the cell membrane. It localises to the cytoplasmic vesicle membrane. The catalysed reaction is S-hexadecanoyl-L-cysteinyl-[protein] + H2O = L-cysteinyl-[protein] + hexadecanoate + H(+). In terms of biological role, hydrolyzes fatty acids from S-acylated cysteine residues in proteins. Acts in sensory neurons including AWC to regulate starvation-induced thermotaxis plasticity and salt learning behavior. This is Alpha/beta hydrolase domain-containing protein aho-3 from Caenorhabditis elegans.